We begin with the raw amino-acid sequence, 207 residues long: Na(+)-translocating NADH-quinone reductase subunit D (207 aa).

Transmembrane regions (helical) follow at residues 20-40 (IALQILGICSALAVTTQLQTA), 41-61 (FVMAIAVSLVTAFSSMFISMI), 69-89 (IRIIVQMAIIASLVILVDQIL), 102-122 (VFVGLIITNCIVMGRAEAFAM), 130-150 (FVDGIGNGLGYGAMLVIVAFL), and 177-197 (NGLFLLAPSAFFIIGFVIWAI).

This sequence belongs to the NqrDE/RnfAE family. As to quaternary structure, composed of six subunits; NqrA, NqrB, NqrC, NqrD, NqrE and NqrF.

It localises to the cell inner membrane. The enzyme catalyses a ubiquinone + n Na(+)(in) + NADH + H(+) = a ubiquinol + n Na(+)(out) + NAD(+). Functionally, NQR complex catalyzes the reduction of ubiquinone-1 to ubiquinol by two successive reactions, coupled with the transport of Na(+) ions from the cytoplasm to the periplasm. NqrA to NqrE are probably involved in the second step, the conversion of ubisemiquinone to ubiquinol. The polypeptide is Na(+)-translocating NADH-quinone reductase subunit D (Haemophilus ducreyi (strain 35000HP / ATCC 700724)).